The following is a 317-amino-acid chain: MKPLNIIFAGTPDFAAQHLQALLQSQHNVLAVYTQPDKPAGRGQTLRASAVKILAEKHHIPVYQPKSLRKVEVQENLSKLNADVMVVVAYGLILPLAVLQTFPLGCLNVHGSLLPRWRGAAPIQRAIWAGDKKTGVTIMQMNEGLDTGDMLHKVCCDITPTETSTSLYTKLANIAPKALLEVLDGLEQSLFKAEVQDESLSNYAEKLSKEEAKLDWSLSAEQLERCIRAFNPWPMSYFVTQDSQGTLQTLKVYQASVLPHQDKPCGTILAADKRGIQVATANGVLNLEQLQPAGKKPMSARDLLNSRADWFKIGQVL.

112 to 115 (SLLP) is a (6S)-5,6,7,8-tetrahydrofolate binding site.

This sequence belongs to the Fmt family.

The enzyme catalyses L-methionyl-tRNA(fMet) + (6R)-10-formyltetrahydrofolate = N-formyl-L-methionyl-tRNA(fMet) + (6S)-5,6,7,8-tetrahydrofolate + H(+). Its function is as follows. Attaches a formyl group to the free amino group of methionyl-tRNA(fMet). The formyl group appears to play a dual role in the initiator identity of N-formylmethionyl-tRNA by promoting its recognition by IF2 and preventing the misappropriation of this tRNA by the elongation apparatus. The protein is Methionyl-tRNA formyltransferase of Histophilus somni (strain 129Pt) (Haemophilus somnus).